A 249-amino-acid chain; its full sequence is ATP synthase subunit a (249 aa).

A run of 6 helical transmembrane segments spans residues alanine 29–serine 49, phenylalanine 84–phenylalanine 104, isoleucine 114–tyrosine 134, phenylalanine 140–isoleucine 160, phenylalanine 193–isoleucine 213, and valine 216–leucine 236.

The protein belongs to the ATPase A chain family. In terms of assembly, F-type ATPases have 2 components, CF(1) - the catalytic core - and CF(0) - the membrane proton channel. CF(1) has five subunits: alpha(3), beta(3), gamma(1), delta(1), epsilon(1). CF(0) has three main subunits: a(1), b(2) and c(9-12). The alpha and beta chains form an alternating ring which encloses part of the gamma chain. CF(1) is attached to CF(0) by a central stalk formed by the gamma and epsilon chains, while a peripheral stalk is formed by the delta and b chains.

Its subcellular location is the cell inner membrane. Its function is as follows. Key component of the proton channel; it plays a direct role in the translocation of protons across the membrane. In Agrobacterium fabrum (strain C58 / ATCC 33970) (Agrobacterium tumefaciens (strain C58)), this protein is ATP synthase subunit a.